Reading from the N-terminus, the 300-residue chain is 33 kDa chaperonin (300 aa).

Cystine bridges form between C235–C237 and C269–C272.

This sequence belongs to the HSP33 family. Under oxidizing conditions two disulfide bonds are formed involving the reactive cysteines. Under reducing conditions zinc is bound to the reactive cysteines and the protein is inactive.

It is found in the cytoplasm. In terms of biological role, redox regulated molecular chaperone. Protects both thermally unfolding and oxidatively damaged proteins from irreversible aggregation. Plays an important role in the bacterial defense system toward oxidative stress. This chain is 33 kDa chaperonin, found in Pseudomonas fluorescens (strain ATCC BAA-477 / NRRL B-23932 / Pf-5).